Here is a 182-residue protein sequence, read N- to C-terminus: Ribosome maturation factor RimM (182 aa).

Positions 103–182 (EDDYYWKDLM…RVEVDWDPGF (80 aa)) constitute a PRC barrel domain.

This sequence belongs to the RimM family. Binds ribosomal protein uS19.

Its subcellular location is the cytoplasm. An accessory protein needed during the final step in the assembly of 30S ribosomal subunit, possibly for assembly of the head region. Essential for efficient processing of 16S rRNA. May be needed both before and after RbfA during the maturation of 16S rRNA. It has affinity for free ribosomal 30S subunits but not for 70S ribosomes. In Yersinia enterocolitica serotype O:8 / biotype 1B (strain NCTC 13174 / 8081), this protein is Ribosome maturation factor RimM.